Reading from the N-terminus, the 110-residue chain is UPF0122 protein SE_0911 (110 aa).

This sequence belongs to the UPF0122 family.

Functionally, might take part in the signal recognition particle (SRP) pathway. This is inferred from the conservation of its genetic proximity to ftsY/ffh. May be a regulatory protein. This chain is UPF0122 protein SE_0911, found in Staphylococcus epidermidis (strain ATCC 12228 / FDA PCI 1200).